The primary structure comprises 289 residues: Energy-coupling factor transporter ATP-binding protein EcfA2 (289 aa).

The region spanning 3 to 246 is the ABC transporter domain; the sequence is IQAKKLNYTY…PEWLKNHHLN (244 aa). Position 40 to 47 (40 to 47) interacts with ATP; it reads GHTGSGKS.

This sequence belongs to the ABC transporter superfamily. Energy-coupling factor EcfA family. In terms of assembly, forms a stable energy-coupling factor (ECF) transporter complex composed of 2 membrane-embedded substrate-binding proteins (S component), 2 ATP-binding proteins (A component) and 2 transmembrane proteins (T component).

It localises to the cell membrane. Its function is as follows. ATP-binding (A) component of a common energy-coupling factor (ECF) ABC-transporter complex. Unlike classic ABC transporters this ECF transporter provides the energy necessary to transport a number of different substrates. This is Energy-coupling factor transporter ATP-binding protein EcfA2 from Ligilactobacillus salivarius (strain UCC118) (Lactobacillus salivarius).